A 103-amino-acid polypeptide reads, in one-letter code: Small ribosomal subunit protein uS10 (103 aa).

Belongs to the universal ribosomal protein uS10 family. In terms of assembly, part of the 30S ribosomal subunit.

Its function is as follows. Involved in the binding of tRNA to the ribosomes. The sequence is that of Small ribosomal subunit protein uS10 from Borreliella burgdorferi (strain ATCC 35210 / DSM 4680 / CIP 102532 / B31) (Borrelia burgdorferi).